Reading from the N-terminus, the 91-residue chain is Large ribosomal subunit protein uL23 (91 aa).

The protein belongs to the universal ribosomal protein uL23 family. As to quaternary structure, part of the 50S ribosomal subunit. Contacts protein L29, and trigger factor when it is bound to the ribosome.

Its function is as follows. One of the early assembly proteins it binds 23S rRNA. One of the proteins that surrounds the polypeptide exit tunnel on the outside of the ribosome. Forms the main docking site for trigger factor binding to the ribosome. The protein is Large ribosomal subunit protein uL23 of Staphylococcus saprophyticus subsp. saprophyticus (strain ATCC 15305 / DSM 20229 / NCIMB 8711 / NCTC 7292 / S-41).